The following is a 249-amino-acid chain: tRNA pseudouridine synthase A (249 aa).

Asp-52 serves as the catalytic Nucleophile. Tyr-110 serves as a coordination point for substrate.

Belongs to the tRNA pseudouridine synthase TruA family. In terms of assembly, homodimer.

The enzyme catalyses uridine(38/39/40) in tRNA = pseudouridine(38/39/40) in tRNA. Functionally, formation of pseudouridine at positions 38, 39 and 40 in the anticodon stem and loop of transfer RNAs. This Exiguobacterium sibiricum (strain DSM 17290 / CCUG 55495 / CIP 109462 / JCM 13490 / 255-15) protein is tRNA pseudouridine synthase A.